Here is a 191-residue protein sequence, read N- to C-terminus: Probable DNA-directed RNA polymerase subunit delta (191 aa).

In terms of domain architecture, HTH HARE-type spans 14–83; that stretch reads LSMIEVARAI…GENKWGLRSW (70 aa). The tract at residues 119 to 191 is disordered; that stretch reads EDAIDYRDDD…EDEEDEEPVL (73 aa).

In terms of assembly, RNAP is composed of a core of 2 alpha, a beta and a beta' subunits. The core is associated with a delta subunit and one of several sigma factors.

Functionally, participates in both the initiation and recycling phases of transcription. In the presence of the delta subunit, RNAP displays an increased specificity of transcription, a decreased affinity for nucleic acids, and an increased efficiency of RNA synthesis because of enhanced recycling. The sequence is that of Probable DNA-directed RNA polymerase subunit delta from Streptococcus pyogenes serotype M6 (strain ATCC BAA-946 / MGAS10394).